The primary structure comprises 1240 residues: Pectate lyase L (1240 aa).

The first 26 residues, 1-26 (MRNCKGLSILLCFLLVFFAMPFPAVA), serve as a signal peptide directing secretion. Has catalytic activity stretches follow at residues 27–551 (EEAE…VTVR) and 545–1240 (TLKV…KSIK). Ca(2+) contacts are provided by aspartate 325, glutamate 349, aspartate 350, aspartate 1049, aspartate 1073, aspartate 1074, and aspartate 1077. Lysine 1117 functions as the Proton acceptor in the catalytic mechanism.

It belongs to the polysaccharide lyase 9 family. Ca(2+) is required as a cofactor.

It localises to the secreted. The enzyme catalyses Eliminative cleavage of (1-&gt;4)-alpha-D-galacturonan to give oligosaccharides with 4-deoxy-alpha-D-galact-4-enuronosyl groups at their non-reducing ends.. With respect to regulation, inhibited by the metal chelator ethylenediaminetetraacetic acid (EDTA). Functionally, cleaves polygalacturonate or partially methylated pectin. When assayed on polygalacturonate or on pectin, it releases monogalacturonate as the principal product. The polypeptide is Pectate lyase L (Thermoclostridium stercorarium (Clostridium stercorarium)).